We begin with the raw amino-acid sequence, 143 residues long: MRLLGLDVGSRTVGVAVSDPMGWTAQGVEIIRINEDEKEFGLARLGEIIKEKQAKGVVVGLPKNMNNSEGPRAEAARQYAQMVEDQFNLPTDFQDERLTTVQAERMLVEEADVSRKKRKQVIDKIAAEFILQNYLDANGPLTK.

This sequence belongs to the YqgF nuclease family.

It is found in the cytoplasm. Functionally, could be a nuclease involved in processing of the 5'-end of pre-16S rRNA. The protein is Putative pre-16S rRNA nuclease of Leuconostoc citreum (strain KM20).